We begin with the raw amino-acid sequence, 302 residues long: MTYPKRIPINAWSEVHRVARPLIITFDAYNTLYATKLPVMEQYCIVGRKYGIKANPSTLTNNFPHVFKKLKEDYPQYGKYSGIKPEQWWSILIRNVFAPNEIPDEMINEILMRFEGFDSYFVYPDLIKFLKDLKSRHPDVILGIVSNTDPIFYKLLKNIGLFETFSGHIYLSYELNLAKPDRAIFQYALDDIISKQPHLLEKYTREEILQHCFHIGDELKNDLEGAEAAGWTGILLDRNDKYGFLSNSISKPMRDEYKLSIDKIDNNSINTWEANTKQTDTLQLSERKYVVSNLEVLEELFP.

It belongs to the HAD-like hydrolase superfamily.

This is an uncharacterized protein from Saccharomyces cerevisiae (strain ATCC 204508 / S288c) (Baker's yeast).